Here is a 291-residue protein sequence, read N- to C-terminus: Transmembrane O-methyltransferase (291 aa).

Residues 31–51 (VGTMSPAIALAFLPLVVTLLV) traverse the membrane as a helical segment. Residues glutamate 137, 139–140 (GT), serine 145, glutamate 163, and serine 193 each bind S-adenosyl-L-methionine.

This sequence belongs to the class I-like SAM-binding methyltransferase superfamily. Cation-dependent O-methyltransferase family. Interacts with LHFPL5, PCDH15, TMC1, TMC2 and TMIE. Interacts directly with TMC1. The interaction of TOMT with TMC1 and TMC2 is required for the transportation of TMC1/2 into the stereocilia of hair cells.

The protein resides in the membrane. Its subcellular location is the cytoplasm. The protein localises to the endoplasmic reticulum. It catalyses the reaction a catechol + S-adenosyl-L-methionine = a guaiacol + S-adenosyl-L-homocysteine + H(+). Functionally, catalyzes the O-methylation, and thereby the inactivation, of catecholamine neurotransmitters and catechol hormones. Required for auditory function. Component of the cochlear hair cell's mechanotransduction (MET) machinery. Involved in the assembly of the asymmetric tip-link MET complex. Required for transportation of TMC1 and TMC2 proteins into the mechanically sensitive stereocilia of the hair cells. The function in MET is independent of the enzymatic activity. This is Transmembrane O-methyltransferase from Pan troglodytes (Chimpanzee).